We begin with the raw amino-acid sequence, 263 residues long: Nitrogenase iron protein 2 (263 aa).

9 to 16 (GKGGIGKS) contributes to the ATP binding site. Cysteine 92 is a binding site for [4Fe-4S] cluster. An ADP-ribosylarginine; by dinitrogenase reductase ADP-ribosyltransferase modification is found at arginine 95. Cysteine 127 provides a ligand contact to [4Fe-4S] cluster.

The protein belongs to the NifH/BchL/ChlL family. In terms of assembly, homodimer. The cofactor is [4Fe-4S] cluster. Post-translationally, the reversible ADP-ribosylation of Arg-95 inactivates the nitrogenase reductase and regulates nitrogenase activity.

The catalysed reaction is N2 + 8 reduced [2Fe-2S]-[ferredoxin] + 16 ATP + 16 H2O = H2 + 8 oxidized [2Fe-2S]-[ferredoxin] + 2 NH4(+) + 16 ADP + 16 phosphate + 6 H(+). Its function is as follows. The key enzymatic reactions in nitrogen fixation are catalyzed by the nitrogenase complex, which has 2 components: the iron protein and the molybdenum-iron protein. The protein is Nitrogenase iron protein 2 (nifH2) of Methanobacterium ivanovii.